Consider the following 470-residue polypeptide: Putative bifunctional phosphatase/peptidyl-prolyl cis-trans isomerase (470 aa).

The active-site Nucleophile is the aspartate 22. The Mg(2+) site is built by aspartate 22, aspartate 24, and aspartate 221. Residues threonine 286–valine 468 enclose the PPIase cyclophilin-type domain.

This sequence in the C-terminal section; belongs to the cyclophilin-type PPIase family. PPIL1 subfamily. It depends on Mg(2+) as a cofactor.

The catalysed reaction is [protein]-peptidylproline (omega=180) = [protein]-peptidylproline (omega=0). Its function is as follows. PPIases accelerate the folding of proteins. It catalyzes the cis-trans isomerization of proline imidic peptide bonds in oligopeptides. The sequence is that of Putative bifunctional phosphatase/peptidyl-prolyl cis-trans isomerase from Streptococcus pyogenes serotype M6 (strain ATCC BAA-946 / MGAS10394).